A 309-amino-acid chain; its full sequence is Probable manganese-dependent inorganic pyrophosphatase (309 aa).

Mn(2+) is bound by residues His9, Asp13, Asp15, Asp75, His97, and Asp149.

The protein belongs to the PPase class C family. It depends on Mn(2+) as a cofactor.

Its subcellular location is the cytoplasm. The enzyme catalyses diphosphate + H2O = 2 phosphate + H(+). This is Probable manganese-dependent inorganic pyrophosphatase from Staphylococcus aureus (strain COL).